The following is a 377-amino-acid chain: Lipoyl synthase, mitochondrial (377 aa).

The transit peptide at 1–77 (MFRRGGRILN…LPNGSVHKRL (77 aa)) directs the protein to the mitochondrion. Positions 107, 112, 118, 138, 142, 145, and 353 each coordinate [4Fe-4S] cluster. The Radical SAM core domain occupies 123-342 (DKTRATATIM…RKRAEELGFL (220 aa)).

It belongs to the radical SAM superfamily. Lipoyl synthase family. Requires [4Fe-4S] cluster as cofactor.

It localises to the mitochondrion. The enzyme catalyses [[Fe-S] cluster scaffold protein carrying a second [4Fe-4S](2+) cluster] + N(6)-octanoyl-L-lysyl-[protein] + 2 oxidized [2Fe-2S]-[ferredoxin] + 2 S-adenosyl-L-methionine + 4 H(+) = [[Fe-S] cluster scaffold protein] + N(6)-[(R)-dihydrolipoyl]-L-lysyl-[protein] + 4 Fe(3+) + 2 hydrogen sulfide + 2 5'-deoxyadenosine + 2 L-methionine + 2 reduced [2Fe-2S]-[ferredoxin]. Its pathway is protein modification; protein lipoylation via endogenous pathway; protein N(6)-(lipoyl)lysine from octanoyl-[acyl-carrier-protein]: step 2/2. Functionally, catalyzes the radical-mediated insertion of two sulfur atoms into the C-6 and C-8 positions of the octanoyl moiety bound to the lipoyl domains of lipoate-dependent enzymes, thereby converting the octanoylated domains into lipoylated derivatives. The polypeptide is Lipoyl synthase, mitochondrial (Schizosaccharomyces japonicus (strain yFS275 / FY16936) (Fission yeast)).